The following is a 201-amino-acid chain: Small ribosomal subunit protein uS4 (201 aa).

A disordered region spans residues 1-38 (MARYTGPATRKSRRLGVDLVGGDQSFEKRPYPPGQHGR). In terms of domain architecture, S4 RNA-binding spans 91 to 157 (SRLDNVVYRA…DPFVIARETA (67 aa)).

Belongs to the universal ribosomal protein uS4 family. As to quaternary structure, part of the 30S ribosomal subunit. Contacts protein S5. The interaction surface between S4 and S5 is involved in control of translational fidelity.

Its function is as follows. One of the primary rRNA binding proteins, it binds directly to 16S rRNA where it nucleates assembly of the body of the 30S subunit. In terms of biological role, with S5 and S12 plays an important role in translational accuracy. The chain is Small ribosomal subunit protein uS4 from Mycobacterium sp. (strain JLS).